We begin with the raw amino-acid sequence, 242 residues long: Ribonuclease PH (242 aa).

Residues Arg90 and 128–130 (GTR) each bind phosphate.

The protein belongs to the RNase PH family. As to quaternary structure, homohexameric ring arranged as a trimer of dimers.

It carries out the reaction tRNA(n+1) + phosphate = tRNA(n) + a ribonucleoside 5'-diphosphate. Its function is as follows. Phosphorolytic 3'-5' exoribonuclease that plays an important role in tRNA 3'-end maturation. Removes nucleotide residues following the 3'-CCA terminus of tRNAs; can also add nucleotides to the ends of RNA molecules by using nucleoside diphosphates as substrates, but this may not be physiologically important. Probably plays a role in initiation of 16S rRNA degradation (leading to ribosome degradation) during starvation. This Nocardioides sp. (strain ATCC BAA-499 / JS614) protein is Ribonuclease PH.